The primary structure comprises 388 residues: Lipid-A-disaccharide synthase (388 aa).

The protein belongs to the LpxB family.

The catalysed reaction is a lipid X + a UDP-2-N,3-O-bis[(3R)-3-hydroxyacyl]-alpha-D-glucosamine = a lipid A disaccharide + UDP + H(+). It functions in the pathway bacterial outer membrane biogenesis; LPS lipid A biosynthesis. Functionally, condensation of UDP-2,3-diacylglucosamine and 2,3-diacylglucosamine-1-phosphate to form lipid A disaccharide, a precursor of lipid A, a phosphorylated glycolipid that anchors the lipopolysaccharide to the outer membrane of the cell. The chain is Lipid-A-disaccharide synthase from Saccharophagus degradans (strain 2-40 / ATCC 43961 / DSM 17024).